Here is a 163-residue protein sequence, read N- to C-terminus: NADH-quinone oxidoreductase subunit I (163 aa).

4Fe-4S ferredoxin-type domains are found at residues 53-83 (LRRYPNGEERCIACKLCEAICPAQAITIEAG) and 94-123 (VRYDIDMVKCIYCGFCQEACPVDAIVEGPN). [4Fe-4S] cluster is bound by residues cysteine 63, cysteine 66, cysteine 69, cysteine 73, cysteine 103, cysteine 106, cysteine 109, and cysteine 113.

This sequence belongs to the complex I 23 kDa subunit family. As to quaternary structure, NDH-1 is composed of 14 different subunits. Subunits NuoA, H, J, K, L, M, N constitute the membrane sector of the complex. [4Fe-4S] cluster is required as a cofactor.

Its subcellular location is the cell inner membrane. The catalysed reaction is a quinone + NADH + 5 H(+)(in) = a quinol + NAD(+) + 4 H(+)(out). Its function is as follows. NDH-1 shuttles electrons from NADH, via FMN and iron-sulfur (Fe-S) centers, to quinones in the respiratory chain. The immediate electron acceptor for the enzyme in this species is believed to be ubiquinone. Couples the redox reaction to proton translocation (for every two electrons transferred, four hydrogen ions are translocated across the cytoplasmic membrane), and thus conserves the redox energy in a proton gradient. This Brucella melitensis biotype 1 (strain ATCC 23456 / CCUG 17765 / NCTC 10094 / 16M) protein is NADH-quinone oxidoreductase subunit I.